Reading from the N-terminus, the 298-residue chain is uncharacterized protein (298 aa).

A signal peptide spans 1–19; it reads MFRKFLFIQLLIVTSLVKA. The disordered stretch occupies residues 278–298; it reads RNNPPLKNNNAKSKNSYETYK. Positions 279–298 are enriched in low complexity; sequence NNPPLKNNNAKSKNSYETYK.

It to R.prowazekii RP296.

This is an uncharacterized protein from Rickettsia prowazekii (strain Madrid E).